The chain runs to 89 residues: Small ribosomal subunit protein uS15 (89 aa).

The protein belongs to the universal ribosomal protein uS15 family. Part of the 30S ribosomal subunit. Forms a bridge to the 50S subunit in the 70S ribosome, contacting the 23S rRNA.

Functionally, one of the primary rRNA binding proteins, it binds directly to 16S rRNA where it helps nucleate assembly of the platform of the 30S subunit by binding and bridging several RNA helices of the 16S rRNA. In terms of biological role, forms an intersubunit bridge (bridge B4) with the 23S rRNA of the 50S subunit in the ribosome. This chain is Small ribosomal subunit protein uS15, found in Paraburkholderia phymatum (strain DSM 17167 / CIP 108236 / LMG 21445 / STM815) (Burkholderia phymatum).